Here is a 314-residue protein sequence, read N- to C-terminus: Serine hydrolase-like protein 2 (314 aa).

Positions 33 to 293 (PPVLCLHGWL…GNHCVHMSEP (261 aa)) constitute an AB hydrolase-1 domain. Residue serine 108 is part of the active site.

The protein belongs to the AB hydrolase superfamily.

The protein localises to the cytoplasm. Its subcellular location is the perinuclear region. It localises to the peroxisome. Functionally, probable serine hydrolase. May be related to cell muscle hypertrophy. The protein is Serine hydrolase-like protein 2 (SERHL2) of Homo sapiens (Human).